A 224-amino-acid chain; its full sequence is Endonuclease NucS (224 aa).

It belongs to the NucS endonuclease family.

The protein resides in the cytoplasm. Functionally, cleaves both 3' and 5' ssDNA extremities of branched DNA structures. The chain is Endonuclease NucS from Rhodococcus jostii (strain RHA1).